The following is a 218-amino-acid chain: Outer-membrane lipoprotein LolB (218 aa).

The first 20 residues, 1 to 20 (MSQVIRTLALTGLALAGLSG), serve as a signal peptide directing secretion. Cysteine 21 carries N-palmitoyl cysteine lipidation. Cysteine 21 carries S-diacylglycerol cysteine lipidation.

This sequence belongs to the LolB family. Monomer.

It localises to the cell outer membrane. Functionally, plays a critical role in the incorporation of lipoproteins in the outer membrane after they are released by the LolA protein. The polypeptide is Outer-membrane lipoprotein LolB (Xanthomonas campestris pv. campestris (strain B100)).